Here is a 115-residue protein sequence, read N- to C-terminus: NADH-ubiquinone oxidoreductase chain 3 (115 aa).

3 helical membrane-spanning segments follow: residues 4–24 (LMVLTVNMMLSTCLILIAFWL), 55–75 (FFLVAITFLLFDLEIALLLPL), and 84–104 (INIMTLTSFILVSVLALGLAY).

Belongs to the complex I subunit 3 family. As to quaternary structure, core subunit of respiratory chain NADH dehydrogenase (Complex I) which is composed of 45 different subunits. Interacts with TMEM186. Interacts with TMEM242.

The protein resides in the mitochondrion membrane. The enzyme catalyses a ubiquinone + NADH + 5 H(+)(in) = a ubiquinol + NAD(+) + 4 H(+)(out). Core subunit of the mitochondrial membrane respiratory chain NADH dehydrogenase (Complex I) that is believed to belong to the minimal assembly required for catalysis. Complex I functions in the transfer of electrons from NADH to the respiratory chain. The immediate electron acceptor for the enzyme is believed to be ubiquinone. This is NADH-ubiquinone oxidoreductase chain 3 from Onychomys leucogaster (Northern grasshopper mouse).